We begin with the raw amino-acid sequence, 519 residues long: Ribonuclease Y 1 (519 aa).

The helical transmembrane segment at 3 to 23 (VPIVILAIIAIVVGVVGGYYL) threads the bilayer. Residues 92–120 (QREETLDRKDNSLEKRENSLNRRDKKLSA) are compositionally biased toward basic and acidic residues. The disordered stretch occupies residues 92-124 (QREETLDRKDNSLEKRENSLNRRDKKLSAEEQN). In terms of domain architecture, KH spans 209–272 (TITVVTLPND…EVAKIALEKL (64 aa)). The HD domain maps to 335–428 (ALAHSIEVAK…VSTADIISAT (94 aa)).

Belongs to the RNase Y family.

Its subcellular location is the cell membrane. Endoribonuclease that initiates mRNA decay. The chain is Ribonuclease Y 1 from Levilactobacillus brevis (strain ATCC 367 / BCRC 12310 / CIP 105137 / JCM 1170 / LMG 11437 / NCIMB 947 / NCTC 947) (Lactobacillus brevis).